The primary structure comprises 506 residues: MNALQDQHVLILGLGASGLAMARWCARCGARVTVADTRSAPPQLAALQRELPAAQFISGAFDAALVVGTDVRAVFKSPGLSPLDVATVIEAANTIGIRATGELGLFSQALADLKATQNYTPKVLAVTGTNGKTTVTALTGLLVERGGKSVAVAGNIGPTLLDTLIQHLAAGTLPEVWVIELSSFQLEGETGFEPSAAAVLNITQDHLDWHGSMAAYVAAKAHVFGATGLMILNREDPQVMAMLPEPVRVKLQRPQLRAHVTFGADLPRRPGDFGLEQVNGMLWLVRALEADETLKNRKGETPELFLQRLMPADALRIRGRHNAVNALAALALAQAAGCALGPMLYGLRDYRGEPHRVAPIGIFNEVEFFDDSKGTNVGATVAALAGLGSERKVIVILGGEGKGQDFAPLVDPVSRYARAVVLIGRDAPLLRAALQATHVPLLEAESMAQAVALANAQAHAGDAVLLSPACASFDMFDNYEHRAQVFAQAVGELASAAGAAWEGAAP.

G128–T134 is an ATP binding site.

Belongs to the MurCDEF family.

The protein localises to the cytoplasm. The catalysed reaction is UDP-N-acetyl-alpha-D-muramoyl-L-alanine + D-glutamate + ATP = UDP-N-acetyl-alpha-D-muramoyl-L-alanyl-D-glutamate + ADP + phosphate + H(+). It functions in the pathway cell wall biogenesis; peptidoglycan biosynthesis. Cell wall formation. Catalyzes the addition of glutamate to the nucleotide precursor UDP-N-acetylmuramoyl-L-alanine (UMA). In Albidiferax ferrireducens (strain ATCC BAA-621 / DSM 15236 / T118) (Rhodoferax ferrireducens), this protein is UDP-N-acetylmuramoylalanine--D-glutamate ligase.